The chain runs to 620 residues: Probable potassium transport system protein Kup 2 (620 aa).

Transmembrane regions (helical) follow at residues 10-30 (LLVSAVGVVFGDIGTSPLYAL), 50-70 (VLSLVFWTVMLLVTVKYVIVI), 102-122 (MMLGVIAAALFYGDSMITPAI), 136-156 (PDLRPYVVPITAVVLTALFAI), 168-188 (FGPVMCLWFITLAVLGIVNVI), 211-231 (LMSFYALGSVVLAVTGGEALY), 246-266 (WFCLVLPALLLNYFGQGALLI), 284-304 (MVVPLVALATFAAVIASQAVI), 336-356 (IYVPFTNWTLYLAVMALVVGF), 368-388 (IAVTSTMMIDTILVSFVMALL), 393-413 (MALVITVVGTLLAVDIAFFSA), and 415-435 (IIKVAQGGWFPLFIGFISFTV).

This sequence belongs to the HAK/KUP transporter (TC 2.A.72) family.

The protein resides in the cell inner membrane. The enzyme catalyses K(+)(in) + H(+)(in) = K(+)(out) + H(+)(out). In terms of biological role, transport of potassium into the cell. Likely operates as a K(+):H(+) symporter. This chain is Probable potassium transport system protein Kup 2, found in Rhodopseudomonas palustris (strain BisB5).